Consider the following 207-residue polypeptide: Guanylate kinase (207 aa).

The 180-residue stretch at 5-184 folds into the Guanylate kinase-like domain; the sequence is GNLFIVSAPS…ALADLVAIIR (180 aa). ATP is bound at residue 12–19; it reads APSGAGKS.

The protein belongs to the guanylate kinase family.

It localises to the cytoplasm. It catalyses the reaction GMP + ATP = GDP + ADP. Its function is as follows. Essential for recycling GMP and indirectly, cGMP. The polypeptide is Guanylate kinase (Shewanella violacea (strain JCM 10179 / CIP 106290 / LMG 19151 / DSS12)).